The following is a 413-amino-acid chain: Protein PHR1-LIKE 1 (413 aa).

Disordered stretches follow at residues 171 to 196 (SEPNWSELLGDSSSHNPNSEIPTPFL) and 208 to 233 (QQQMVSSEDQLSGRNSSSSVATSKQR). 2 stretches are compositionally biased toward polar residues: residues 181–191 (DSSSHNPNSEI) and 208–231 (QQQMVSSEDQLSGRNSSSSVATSK). The region spanning 228–288 (ATSKQRMRWT…HLQKYRTARY (61 aa)) is the HTH myb-type domain. Residues 259-284 (PKAVLKLLNNPGLTIYHVKSHLQKYR) constitute a DNA-binding region (H-T-H motif). A coiled coil region spans residues 322 to 342 (TQALRLQMEVQKRLHEQLEIQ). An LHEQLE motif is present at residues 335–340 (LHEQLE). The segment at 363–413 (QQKIQDNKSSSSEASPKQCNGSFAEVEVGLETLTGDQNESASASRKRVRED) is disordered. Polar residues-rich tracts occupy residues 369–383 (NKSSSSEASPKQCNG) and 396–405 (TGDQNESASA).

Belongs to the MYB-CC family. In terms of assembly, homodimers and heterodimers. Interacts with MED25. Does not interact with PHL2 or PHL3. Expressed in shoots and roots.

It is found in the nucleus. Transcription factor acting as central integrator of phosphate starvation responses. Regulates FER1 expression upon phosphate starvation, linking iron and phosphate homeostasis. The protein is Protein PHR1-LIKE 1 (PHL1) of Arabidopsis thaliana (Mouse-ear cress).